The following is a 308-amino-acid chain: Ribonuclease Z (308 aa).

7 residues coordinate Zn(2+): H60, H62, D64, H65, H140, D209, and H269. Catalysis depends on D64, which acts as the Proton acceptor.

It belongs to the RNase Z family. As to quaternary structure, homodimer. Zn(2+) serves as cofactor.

It catalyses the reaction Endonucleolytic cleavage of RNA, removing extra 3' nucleotides from tRNA precursor, generating 3' termini of tRNAs. A 3'-hydroxy group is left at the tRNA terminus and a 5'-phosphoryl group is left at the trailer molecule.. Functionally, zinc phosphodiesterase, which displays some tRNA 3'-processing endonuclease activity. Probably involved in tRNA maturation, by removing a 3'-trailer from precursor tRNA. In Methanococcus maripaludis (strain DSM 14266 / JCM 13030 / NBRC 101832 / S2 / LL), this protein is Ribonuclease Z.